Consider the following 177-residue polypeptide: Inner membrane protein p22 (177 aa).

Residues 1–7 are Intravirion-facing; the sequence is MFNIKMT. The chain crosses the membrane as a helical span at residues 8-28; it reads ISVLLIALIVLLIIILVVFLY. Residues 29–177 are Virion surface-facing; sequence YKKQQPPKKV…IALPRNHKHA (149 aa).

It belongs to the asfivirus inner membrane protein p22 family.

It localises to the virion membrane. The protein resides in the host cell membrane. The polypeptide is Inner membrane protein p22 (African swine fever virus (isolate Warthog/Namibia/Wart80/1980) (ASFV)).